A 352-amino-acid chain; its full sequence is tRNA-specific 2-thiouridylase MnmA (352 aa).

ATP is bound by residues 7–14 (GLSGGVDS) and leucine 33. Cysteine 94 functions as the Nucleophile in the catalytic mechanism. Cysteine 94 and cysteine 193 are oxidised to a cystine. Residue glycine 119 participates in ATP binding. Residues 143 to 145 (KDQ) form an interaction with tRNA region. Cysteine 193 acts as the Cysteine persulfide intermediate in catalysis. The segment at 298–299 (RY) is interaction with tRNA.

Belongs to the MnmA/TRMU family.

It localises to the cytoplasm. The enzyme catalyses S-sulfanyl-L-cysteinyl-[protein] + uridine(34) in tRNA + AH2 + ATP = 2-thiouridine(34) in tRNA + L-cysteinyl-[protein] + A + AMP + diphosphate + H(+). Functionally, catalyzes the 2-thiolation of uridine at the wobble position (U34) of tRNA, leading to the formation of s(2)U34. The sequence is that of tRNA-specific 2-thiouridylase MnmA from Nostoc sp. (strain PCC 7120 / SAG 25.82 / UTEX 2576).